Consider the following 638-residue polypeptide: SUMO-activating enzyme subunit 2 (638 aa).

ATP contacts are provided by residues 24-29, D48, 56-59, K72, 95-96, and 117-122; these read GAGGIG, NLNR, SI, and DNRAAR. 2 residues coordinate Zn(2+): C158 and C161. K164 participates in a covalent cross-link: Glycyl lysine isopeptide (Lys-Gly) (interchain with G-Cter in SUMO1). The active-site Glycyl thioester intermediate is C173. K190 is covalently cross-linked (Glycyl lysine isopeptide (Lys-Gly) (interchain with G-Cter in SUMO)). The tract at residues 202–233 is disordered; the sequence is ADQEVSPDRADPEAAWEPTEAEARARASNEDG. A Phosphoserine modification is found at S207. The span at 222 to 233 shows a compositional bias: basic and acidic residues; it reads AEARARASNEDG. Residue K236 forms a Glycyl lysine isopeptide (Lys-Gly) (interchain with G-Cter in SUMO1); alternate linkage. Glycyl lysine isopeptide (Lys-Gly) (interchain with G-Cter in SUMO2); alternate cross-links involve residues K236 and K257. Residues K257 and K271 each participate in a glycyl lysine isopeptide (Lys-Gly) (interchain with G-Cter in SUMO); alternate cross-link. At K271 the chain carries N6-acetyllysine; alternate. K275 is covalently cross-linked (Glycyl lysine isopeptide (Lys-Gly) (interchain with G-Cter in SUMO)). K369 is covalently cross-linked (Glycyl lysine isopeptide (Lys-Gly) (interchain with G-Cter in SUMO2)). K418 participates in a covalent cross-link: Glycyl lysine isopeptide (Lys-Gly) (interchain with G-Cter in SUMO1); alternate. K418 is covalently cross-linked (Glycyl lysine isopeptide (Lys-Gly) (interchain with G-Cter in SUMO2); alternate). Zn(2+) is bound by residues C439 and C442. S505 is subject to Phosphoserine. A Glycyl lysine isopeptide (Lys-Gly) (interchain with G-Cter in SUMO2) cross-link involves residue K538. Phosphoserine is present on residues S548 and S590. Positions 548-561 are enriched in basic and acidic residues; that stretch reads SPEKVGPKQAEDAA. Residues 548-638 form a disordered region; it reads SPEKVGPKQA…EDPDDVIALD (91 aa). Residues 581 to 594 show a composition bias toward acidic residues; sequence EQDDVLIVDSDEEG. Residues 603-614 show a composition bias toward basic and acidic residues; the sequence is GDDKARKRKLEE. Residue K609 forms a Glycyl lysine isopeptide (Lys-Gly) (interchain with G-Cter in SUMO) linkage. K611 is covalently cross-linked (Glycyl lysine isopeptide (Lys-Gly) (interchain with G-Cter in SUMO); alternate). K611 carries the post-translational modification N6-acetyllysine; alternate. K621 participates in a covalent cross-link: Glycyl lysine isopeptide (Lys-Gly) (interchain with G-Cter in SUMO). Residues 628–638 are compositionally biased toward acidic residues; the sequence is MEDPDDVIALD.

Belongs to the ubiquitin-activating E1 family. As to quaternary structure, heterodimer of SAE1 and UBA2/SAE2. The heterodimer corresponds to the two domains that are encoded on a single polypeptide chain in ubiquitin-activating enzyme E1. Interacts with UBE2I. Sumoylated with SUMO1 and SUMO2/3 and by UBC9. Sumoylation at Lys-236 inhibits enzymatic activity. Sumoylation at the C-terminal lysine cluster plays an essential role in nuclear trafficking. Broadly expressed, with highest levels in testis.

The protein resides in the cytoplasm. It localises to the nucleus. It participates in protein modification; protein sumoylation. Functionally, the heterodimer acts as an E1 ligase for SUMO1, SUMO2, SUMO3, and probably SUMO4. It mediates ATP-dependent activation of SUMO proteins followed by formation of a thioester bond between a SUMO protein and a conserved active site cysteine residue on UBA2/SAE2. This Mus musculus (Mouse) protein is SUMO-activating enzyme subunit 2 (Uba2).